The primary structure comprises 565 residues: Probable beta-glucosidase btgE (565 aa).

Residues 1 to 18 (MRGAILATAAALAGTAMA) form the signal peptide. Residues 246 to 304 (TGQDEPTSAPAAPSTTAVPATTTAAPETTTAAPDTTTAVPSTSSAAPSSSSTAPASTGA) are disordered. Low complexity predominate over residues 251 to 304 (PTSAPAAPSTTAVPATTTAAPETTTAAPDTTTAVPSTSSAAPSSSSTAPASTGA). The Proton donor role is filled by E405. E501 (nucleophile) is an active-site residue.

It belongs to the glycosyl hydrolase 17 family.

The protein resides in the secreted. The protein localises to the cell wall. The enzyme catalyses Hydrolysis of terminal, non-reducing beta-D-glucosyl residues with release of beta-D-glucose.. It functions in the pathway glycan metabolism; cellulose degradation. In terms of biological role, beta-glucosidases are one of a number of cellulolytic enzymes involved in the degradation of cellulosic biomass. Catalyzes the last step releasing glucose from the inhibitory cellobiose. This is Probable beta-glucosidase btgE (btgE) from Aspergillus fumigatus (strain CBS 144.89 / FGSC A1163 / CEA10) (Neosartorya fumigata).